Reading from the N-terminus, the 118-residue chain is Myotrophin (118 aa).

At Cys2 the chain carries N-acetylcysteine. One copy of the ANK 1 repeat lies at 2 to 30; that stretch reads CDKEFMWALKNGDLDEVKDYVAKGEDVNR. An N6-acetyllysine mark is found at Lys4, Lys11, and Lys24. At Thr31 the chain carries Phosphothreonine. ANK repeat units lie at residues 34–66 and 67–99; these read GGRK…APDK and HHIT…VKGP.

Belongs to the myotrophin family. Interacts with RELA. Interacts with the heterodimer formed by CAPZA1 and CAPZB.

Its subcellular location is the cytoplasm. The protein localises to the nucleus. The protein resides in the perinuclear region. In terms of biological role, promotes dimerization of NF-kappa-B subunits and regulates NF-kappa-B transcription factor activity. Promotes growth of cardiomyocytes, but not cardiomyocyte proliferation. Promotes cardiac muscle hypertrophy. Plays a role in the regulation of the growth of actin filaments. Inhibits the activity of the F-actin-capping protein complex formed by the CAPZA1 and CAPZB heterodimer. The chain is Myotrophin (MTPN) from Bos taurus (Bovine).